Here is a 604-residue protein sequence, read N- to C-terminus: ATP-dependent RNA helicase dbp6 (604 aa).

Positions 1–16 (MSVEVDKSSHSKPKIE) are enriched in basic and acidic residues. 2 disordered regions span residues 1 to 37 (MSVE…HVTA) and 51 to 70 (FSQA…NERD). Residues 51–60 (FSQAAQQALK) show a composition bias toward low complexity. Residues 149–157 (GFAVQAAVL) carry the Q motif motif. Residues 167-379 (GPMYSYGGDV…SLKLHNPRLV (213 aa)) form the Helicase ATP-binding domain. ATP is bound at residue 180–187 (AATGSGKT). The DEAD box motif lies at 292 to 295 (DEAD). Residues 406–573 (TLQEYHVSVS…RIKIEFSHIS (168 aa)) form the Helicase C-terminal domain.

It belongs to the DEAD box helicase family. DDX51/DBP6 subfamily. As to quaternary structure, associated with pre-ribosomal particles.

It is found in the nucleus. It localises to the nucleolus. It carries out the reaction ATP + H2O = ADP + phosphate + H(+). Functionally, ATP-binding RNA helicase involved in the biogenesis of 60S ribosomal subunits and is required for the normal formation of 25S and 5.8S rRNAs. The polypeptide is ATP-dependent RNA helicase dbp6 (dbp6) (Schizosaccharomyces pombe (strain 972 / ATCC 24843) (Fission yeast)).